A 252-amino-acid chain; its full sequence is NADP-dependent (R)-specific alcohol dehydrogenase (252 aa).

Residues 16–19 (TLGI), 39–40 (RH), 63–64 (DA), Asn90, Tyr156, Lys160, and 191–195 (IKTPL) each bind NADP(+). Tyr156 (proton donor/acceptor) is an active-site residue. Gln252 is a Mg(2+) binding site.

It belongs to the short-chain dehydrogenases/reductases (SDR) family. As to quaternary structure, homotetramer. Requires Mg(2+) as cofactor.

It carries out the reaction a secondary alcohol + NADP(+) = a ketone + NADPH + H(+). It catalyses the reaction acetophenone + NADPH + H(+) = (R)-1-phenylethanol + NADP(+). The enzyme catalyses 2,5-hexanedione + 2 NADPH + 2 H(+) = (2R,5R)-hexanediol + 2 NADP(+). The catalysed reaction is ethyl 3-oxobutanoate + NADPH + H(+) = ethyl (R)-3-hydroxybutanoate + NADP(+). It carries out the reaction 2-octanone + NADPH + H(+) = (2R)-octan-2-ol + NADP(+). In terms of biological role, NADP-dependent (R)-specific alcohol dehydrogenase (ADH) with a broad substrate specificity, able to catalyze in vitro the stereoselective reduction of several aliphatic and aromatic ketones as well as beta-keto esters to the corresponding enantiomerically pure alcohols. The polypeptide is NADP-dependent (R)-specific alcohol dehydrogenase (Lentilactobacillus kefiri (Lactobacillus kefiri)).